A 232-amino-acid chain; its full sequence is Endonuclease NucS (232 aa).

It belongs to the NucS endonuclease family.

The protein resides in the cytoplasm. In terms of biological role, cleaves both 3' and 5' ssDNA extremities of branched DNA structures. The chain is Endonuclease NucS from Mycobacteroides abscessus (strain ATCC 19977 / DSM 44196 / CCUG 20993 / CIP 104536 / JCM 13569 / NCTC 13031 / TMC 1543 / L948) (Mycobacterium abscessus).